A 199-amino-acid chain; its full sequence is FMN-dependent NADH:quinone oxidoreductase (199 aa).

FMN-binding positions include S9 and 95-98; that span reads MYNF.

It belongs to the azoreductase type 1 family. In terms of assembly, homodimer. The cofactor is FMN.

It catalyses the reaction 2 a quinone + NADH + H(+) = 2 a 1,4-benzosemiquinone + NAD(+). It carries out the reaction N,N-dimethyl-1,4-phenylenediamine + anthranilate + 2 NAD(+) = 2-(4-dimethylaminophenyl)diazenylbenzoate + 2 NADH + 2 H(+). Quinone reductase that provides resistance to thiol-specific stress caused by electrophilic quinones. Functionally, also exhibits azoreductase activity. Catalyzes the reductive cleavage of the azo bond in aromatic azo compounds to the corresponding amines. The polypeptide is FMN-dependent NADH:quinone oxidoreductase (Dechloromonas aromatica (strain RCB)).